A 258-amino-acid polypeptide reads, in one-letter code: Phosphate import ATP-binding protein PstB (258 aa).

The region spanning 5-247 is the ABC transporter domain; it reads IDVSGLTAYY…ERIFSNPSVQ (243 aa). 37–44 contacts ATP; that stretch reads GPSGCGKS.

This sequence belongs to the ABC transporter superfamily. Phosphate importer (TC 3.A.1.7) family. The complex is composed of two ATP-binding proteins (PstB), two transmembrane proteins (PstC and PstA) and a solute-binding protein (PstS).

Its subcellular location is the cell membrane. It catalyses the reaction phosphate(out) + ATP + H2O = ADP + 2 phosphate(in) + H(+). Functionally, part of the ABC transporter complex PstSACB involved in phosphate import. Responsible for energy coupling to the transport system. The chain is Phosphate import ATP-binding protein PstB from Streptomyces avermitilis (strain ATCC 31267 / DSM 46492 / JCM 5070 / NBRC 14893 / NCIMB 12804 / NRRL 8165 / MA-4680).